The following is a 443-amino-acid chain: MSSTDNIVSGKAQHSYWRKSDTTWTLGLFGTAIGAGVLFFPIRAGFGGLIPILVMLVLAYPIAFYCHRALARLCLSGANPSGNITETVEEHFGKTGGVVITFLYFFAICPLLWIYGVTITNTFMTFWENQLHLPALNRGFVALFLLLLMAVIIWFGRDLMVKVMSFLVWPFIASLVLISLSLIPYWNSAVIDQVDLSALSLTGHDGILVTVWLGISIMVFSFNFSPIVSSFVVFKREEYEKKFGRDFTERKCSKIISRASILMVAVVMFFAFSCLFALSPQNMAEAKAQNIPVLSYLANHFSSMSGSQSSFALTLEYAASIIALVAIFKSFFGHYLGTLEGLNRLIIKFAYKGDKSKISMSKLNTLSMVFIMGSTWLVAYVNPNILDLIEAMGAPIIASLLCLLPMYAIHKVPSLAKYRGRIDNVFVTAIGLLTISNIVYKVF.

Helical transmembrane passes span 22–42 (TTWT…FFPI), 44–64 (AGFG…PIAF), 97–117 (GVVI…IYGV), 135–155 (ALNR…IIWF), 163–183 (VMSF…LSLI), 207–227 (ILVT…FSPI), 259–279 (ASIL…FALS), 319–339 (ASII…LGTL), 366–386 (LSMV…PNIL), 389–409 (IEAM…MYAI), and 422–442 (IDNV…VYKV).

The protein belongs to the amino acid/polyamine transporter 2 family. SdaC/TdcC subfamily.

The protein resides in the cell inner membrane. The catalysed reaction is L-threonine(in) + H(+)(in) = L-threonine(out) + H(+)(out). It carries out the reaction L-serine(in) + H(+)(in) = L-serine(out) + H(+)(out). In terms of biological role, involved in the import of threonine and serine into the cell, with the concomitant import of a proton (symport system). The chain is Threonine/serine transporter TdcC from Escherichia fergusonii (strain ATCC 35469 / DSM 13698 / CCUG 18766 / IAM 14443 / JCM 21226 / LMG 7866 / NBRC 102419 / NCTC 12128 / CDC 0568-73).